Here is a 394-residue protein sequence, read N- to C-terminus: Dual-specificity RNA methyltransferase RlmN (394 aa).

Catalysis depends on E116, which acts as the Proton acceptor. The Radical SAM core domain maps to 122-365; the sequence is EEDRGTLCVS…SPIRTPRGED (244 aa). A disulfide bridge links C129 with C370. [4Fe-4S] cluster is bound by residues C136, C140, and C143. S-adenosyl-L-methionine-binding positions include 196–197, S228, 250–252, and N327; these read GE and SFH. C370 (S-methylcysteine intermediate) is an active-site residue.

Belongs to the radical SAM superfamily. RlmN family. The cofactor is [4Fe-4S] cluster.

The protein localises to the cytoplasm. The enzyme catalyses adenosine(2503) in 23S rRNA + 2 reduced [2Fe-2S]-[ferredoxin] + 2 S-adenosyl-L-methionine = 2-methyladenosine(2503) in 23S rRNA + 5'-deoxyadenosine + L-methionine + 2 oxidized [2Fe-2S]-[ferredoxin] + S-adenosyl-L-homocysteine. It catalyses the reaction adenosine(37) in tRNA + 2 reduced [2Fe-2S]-[ferredoxin] + 2 S-adenosyl-L-methionine = 2-methyladenosine(37) in tRNA + 5'-deoxyadenosine + L-methionine + 2 oxidized [2Fe-2S]-[ferredoxin] + S-adenosyl-L-homocysteine. Its function is as follows. Specifically methylates position 2 of adenine 2503 in 23S rRNA and position 2 of adenine 37 in tRNAs. m2A2503 modification seems to play a crucial role in the proofreading step occurring at the peptidyl transferase center and thus would serve to optimize ribosomal fidelity. The polypeptide is Dual-specificity RNA methyltransferase RlmN (Dinoroseobacter shibae (strain DSM 16493 / NCIMB 14021 / DFL 12)).